Here is a 425-residue protein sequence, read N- to C-terminus: Aromatic prenyl transferase ptmE (425 aa).

Residues 83 to 84 (GI) and Glu-92 contribute to the L-tryptophan site. Substrate is bound by residues Arg-107, Lys-198, Tyr-200, Arg-265, Lys-267, Tyr-269, Tyr-345, Tyr-410, and Tyr-414.

It belongs to the tryptophan dimethylallyltransferase family. In terms of assembly, homodimer.

It functions in the pathway secondary metabolite biosynthesis. Functionally, aromatic prenyl transferase; part of the gene cluster that mediates the biosynthesis of the indole diterpenes penitrems. The geranylgeranyl diphosphate (GGPP) synthase ptmG catalyzes the first step in penitrem biosynthesis via conversion of farnesyl pyrophosphate and isopentyl pyrophosphate into geranylgeranyl pyrophosphate (GGPP). Condensation of indole-3-glycerol phosphate with GGPP by the prenyl transferase ptmC then forms 3-geranylgeranylindole (3-GGI). Epoxidation by the FAD-dependent monooxygenase ptmM leads to a epoxidized-GGI that is substrate of the terpene cyclase ptmB for cyclization to yield paspaline. Paspaline is subsequently converted to 13-desoxypaxilline by the cytochrome P450 monooxygenase ptmP, the latter being then converted to paxilline by the cytochrome P450 monooxygenase ptmQ. Paxilline is converted to beta-paxitriol via C-10 ketoreduction by the short-chain dehydrogenase ptmH which can be monoprenylated at the C-20 by the indole diterpene prenyltransferase ptmD. A two-step elimination (acetylation and elimination) process performed by the O-acetyltransferase ptmV and ptmI leads to the production of the prenylated form of penijanthine. The FAD-linked oxidoreductase ptmO then converts the prenylated form of penijanthine into PC-M5 which is in turn transformed into PC-M4 by the aromatic dimethylallyltransferase ptmE. Five sequential oxidative transformations performed by the cytochrome P450 monooxygenases ptmK, ptmU, ptmL, ptmN and ptmJ yield the various penitrem compounds. PtmK, ptmU and ptmM are involved in the formation of the key bicyclic ring of penitrem C via the formation of the intermediates secopenitrem D and penitrem D. PtmL catalyzes the epoxidation of penitrem D and C to yield penitrem B and F, respectively. PtmJ catalyzes the last benzylic hydroxylation to convert penitrem B to prenitrem E and penitrem F to penitrem A. This Penicillium ochrochloron protein is Aromatic prenyl transferase ptmE.